Here is a 144-residue protein sequence, read N- to C-terminus: Putative pre-16S rRNA nuclease (144 aa).

The protein belongs to the YqgF nuclease family.

Its subcellular location is the cytoplasm. Could be a nuclease involved in processing of the 5'-end of pre-16S rRNA. The polypeptide is Putative pre-16S rRNA nuclease (Oleidesulfovibrio alaskensis (strain ATCC BAA-1058 / DSM 17464 / G20) (Desulfovibrio alaskensis)).